Here is a 257-residue protein sequence, read N- to C-terminus: THAP domain-containing protein 10 (257 aa).

The THAP-type zinc finger occupies 1 to 90; sequence MPARCVAAHC…LVAGAVPTLH (90 aa). Polar residues predominate over residues 154–168; that stretch reads QPHADNPSNTVTSVP. Positions 154–178 are disordered; sequence QPHADNPSNTVTSVPTHCEEGPVHK.

This chain is THAP domain-containing protein 10 (THAP10), found in Homo sapiens (Human).